The chain runs to 875 residues: E3 SUMO-protein ligase SIZ1 (875 aa).

The region spanning L12 to L46 is the SAP domain. Residues K114–S169 form a PHD-type zinc finger. The SP-RING-type zinc-finger motif lies at S349 to N430. Residues C380, H382, C403, and C406 each coordinate Zn(2+). The disordered stretch occupies residues G796 to G820. The span at V808–T819 shows a compositional bias: polar residues.

Belongs to the PIAS family.

Its subcellular location is the nucleus. It participates in protein modification; protein sumoylation. Probable SUMO E3 ligase that may regulate Pi starvation responses. The protein is E3 SUMO-protein ligase SIZ1 (SIZ1) of Oryza sativa subsp. japonica (Rice).